Reading from the N-terminus, the 506-residue chain is ATP synthase subunit alpha (506 aa).

The segment covering 119-129 (GPIEYEGKRPI) has biased composition (basic and acidic residues). Residues 119-138 (GPIEYEGKRPIESPAPPIVR) are disordered. ATP is bound at residue 169–176 (GDRQTGKT).

Belongs to the ATPase alpha/beta chains family. As to quaternary structure, F-type ATPases have 2 components, CF(1) - the catalytic core - and CF(0) - the membrane proton channel. CF(1) has five subunits: alpha(3), beta(3), gamma(1), delta(1), epsilon(1). CF(0) has three main subunits: a(1), b(2) and c(9-12). The alpha and beta chains form an alternating ring which encloses part of the gamma chain. CF(1) is attached to CF(0) by a central stalk formed by the gamma and epsilon chains, while a peripheral stalk is formed by the delta and b chains.

Its subcellular location is the cell membrane. It catalyses the reaction ATP + H2O + 4 H(+)(in) = ADP + phosphate + 5 H(+)(out). In terms of biological role, produces ATP from ADP in the presence of a proton gradient across the membrane. The alpha chain is a regulatory subunit. In Caldanaerobacter subterraneus subsp. tengcongensis (strain DSM 15242 / JCM 11007 / NBRC 100824 / MB4) (Thermoanaerobacter tengcongensis), this protein is ATP synthase subunit alpha.